A 279-amino-acid polypeptide reads, in one-letter code: GATA transcription factor 15 (279 aa).

The tract at residues 52–94 (AYDDHSTVTTSPSSPSSSSTGSVDCTLSLGTPSSRRAEPVAAA) is disordered. Residues 58 to 74 (TVTTSPSSPSSSSTGSV) show a composition bias toward low complexity. Residues 154–179 (CANCGTASTPLWRNGPRGPKSLCNAC) form a GATA-type zinc finger.

Belongs to the type IV zinc-finger family. Class B subfamily. Highly expressed in inflorescences. Expressed in vascular bundles of root stele within the elongation zones, of elongating upper internodes and of the junctions of leaf blades and sheaths.

In terms of biological role, probable transcription factor that regulates organogenesis during transition from the vegetative to the reproductive phase. Regulates the expression of CYP78A11/PLA1, HD3A and MADS1 during reproductive development in rice. May act upstream of CYP78A11/PLA1 during panicle development. Acts independently of the photoperiodic and gibberellin signaling pathways. The sequence is that of GATA transcription factor 15 from Oryza sativa subsp. japonica (Rice).